Consider the following 261-residue polypeptide: uncharacterized protein (261 aa).

Glu-46 is an active-site residue.

It belongs to the PhzF family.

This is an uncharacterized protein from Pseudomonas aeruginosa (strain ATCC 15692 / DSM 22644 / CIP 104116 / JCM 14847 / LMG 12228 / 1C / PRS 101 / PAO1).